A 352-amino-acid chain; its full sequence is Peptide chain release factor 1 (352 aa).

Position 233 is an N5-methylglutamine (Gln233). Positions 288–309 (NAKDRKEQVGSGDRSERIRTYN) are disordered. The span at 289–306 (AKDRKEQVGSGDRSERIR) shows a compositional bias: basic and acidic residues.

It belongs to the prokaryotic/mitochondrial release factor family. Methylated by PrmC. Methylation increases the termination efficiency of RF1.

It is found in the cytoplasm. Peptide chain release factor 1 directs the termination of translation in response to the peptide chain termination codons UAG and UAA. The sequence is that of Peptide chain release factor 1 from Helicobacter pylori (strain G27).